Consider the following 538-residue polypeptide: Bifunctional purine biosynthesis protein PurH (538 aa).

Residues 8–158 enclose the MGS-like domain; it reads IPAPDKVKIR…KNHAYVTVVT (151 aa).

Belongs to the PurH family.

It carries out the reaction (6R)-10-formyltetrahydrofolate + 5-amino-1-(5-phospho-beta-D-ribosyl)imidazole-4-carboxamide = 5-formamido-1-(5-phospho-D-ribosyl)imidazole-4-carboxamide + (6S)-5,6,7,8-tetrahydrofolate. It catalyses the reaction IMP + H2O = 5-formamido-1-(5-phospho-D-ribosyl)imidazole-4-carboxamide. It participates in purine metabolism; IMP biosynthesis via de novo pathway; 5-formamido-1-(5-phospho-D-ribosyl)imidazole-4-carboxamide from 5-amino-1-(5-phospho-D-ribosyl)imidazole-4-carboxamide (10-formyl THF route): step 1/1. Its pathway is purine metabolism; IMP biosynthesis via de novo pathway; IMP from 5-formamido-1-(5-phospho-D-ribosyl)imidazole-4-carboxamide: step 1/1. The protein is Bifunctional purine biosynthesis protein PurH of Agrobacterium fabrum (strain C58 / ATCC 33970) (Agrobacterium tumefaciens (strain C58)).